Reading from the N-terminus, the 5084-residue chain is Apicidin F synthase (5084 aa).

Residues 209–606 (ARILQRQPDK…VGRLDSQVKL (398 aa)) form an adenylation 1 region. The Carrier 1 domain occupies 731–808 (HETDNCQRLL…EAASSMREVV (78 aa)). Serine 768 carries the post-translational modification O-(pantetheine 4'-phosphoryl)serine. Condensation stretches follow at residues 822 to 1124 (YPLS…FPIY) and 1309 to 1609 (EIYC…SILV). An adenylation 2 region spans residues 1788 to 2192 (EDPTREAVFS…IGRKDNQIKI (405 aa)). The Carrier 2 domain occupies 2341 to 2415 (VVKDDPVSEL…DMAKGMAPLS (75 aa)). Residue serine 2376 is modified to O-(pantetheine 4'-phosphoryl)serine. Positions 2415–2441 (SLTAPESTSSSSPQSFSTSTSTTIIEN) are disordered. A compositionally biased stretch (low complexity) spans 2421-2437 (STSSSSPQSFSTSTSTT). The segment at 2478–2755 (EDIFPCTPMQ…IVTLPRQLNI (278 aa)) is condensation 3. An adenylation 3 region spans residues 2935-3328 (RNNPRARAVV…GRRDGQIKLR (394 aa)). Positions 3463–3539 (ETWSSSEAIV…DMASRLSRPE (77 aa)) constitute a Carrier 3 domain. At serine 3500 the chain carries O-(pantetheine 4'-phosphoryl)serine. Positions 3581 to 3866 (EDIYPCTPLQ…IATVPSRTTI (286 aa)) are condensation 4. Residues 4029–4426 (RKQVELSPSH…TVSWIGRKDH (398 aa)) form an adenylation 4 region. The Carrier 4 domain maps to 4554–4631 (ALKTPKERLL…DMADLLGPLR (78 aa)). Serine 4592 carries the post-translational modification O-(pantetheine 4'-phosphoryl)serine. The condensation 5 stretch occupies residues 4669 to 4948 (EQIYPCTAYQ…ISKLPLRIQL (280 aa)).

The protein belongs to the NRP synthetase family.

Its pathway is secondary metabolite biosynthesis. Functionally, non-ribosomal peptide synthetase; part of the gene cluster that mediates the biosynthesis of the cyclic tetrapeptide apicidin F (APF). The non-ribosomal peptide synthetase apf1 incorporates four different amino acids to produce apicidin F: L-phenylalanine, D-pipecolic acid (D-pip), N-methoxy-L-tryptophan and L-2-aminooctanedioic acid. L-Phenylalanine is the only proteinogenic amino acid directly used by apf1. The 3 other apf1 substrates are non-proteinogenic and have to be modified by other enzymes of the cluster. Lysine is converted to delta-1-pyrroline-5-carboxylate (P5C) which is reduced to L-pipecolic acid (L-pip) by apf3. L-pip is epimerized to D-pip, probably by apf1 activity, prior to incorporation. L-Tryptophan is N-oxidyzed by one of the cytochrome P450 monooxygenases (apf7 or apf8), and further methylated at the hydroxy group by the O-methyltransferase apf6 to yield N-methoxy-L-tryptophan. The synthesis of the fourth apf1 substrate is more complex. The fatty acid synthase apf5 is involved in the synthesis of the octanoic acid backbone of L-2-aminooctanedioic acid by fixing one acetyl-CoA unit and three malonyl-CoA units. Then one of the cytochrome P450 monooxygenases (apf7 or apf8) may oxidize this backbone to 2-oxooctanoic acid. The aminotransferase apf4 is predicted to catalyze the exchange of the keto group with an amino group. The next step would be the oxidation of 2-aminooctanoic acid by one of the cytochrome P450 monooxygenases (apf7 or apf8). The last step is the oxidation of 2-amino-8-hydroxyoctanoic acid to 2-aminooctanedioic acid is catalyzed by the FAD-dependent monooxygenase apf9. The sequence is that of Apicidin F synthase from Gibberella fujikuroi (strain CBS 195.34 / IMI 58289 / NRRL A-6831) (Bakanae and foot rot disease fungus).